The sequence spans 166 residues: CDP-archaeol synthase (166 aa).

A run of 5 helical transmembrane segments spans residues 1-21 (MPII…LVAN), 55-75 (LLVA…FLGI), 78-98 (IYVS…GAFI), 110-130 (AIGL…IISK), and 131-151 (ISLN…LHIL).

It belongs to the CDP-archaeol synthase family. Mg(2+) serves as cofactor.

The protein resides in the cell membrane. The catalysed reaction is 2,3-bis-O-(geranylgeranyl)-sn-glycerol 1-phosphate + CTP + H(+) = CDP-2,3-bis-O-(geranylgeranyl)-sn-glycerol + diphosphate. The protein operates within membrane lipid metabolism; glycerophospholipid metabolism. Functionally, catalyzes the formation of CDP-2,3-bis-(O-geranylgeranyl)-sn-glycerol (CDP-archaeol) from 2,3-bis-(O-geranylgeranyl)-sn-glycerol 1-phosphate (DGGGP) and CTP. This reaction is the third ether-bond-formation step in the biosynthesis of archaeal membrane lipids. The protein is CDP-archaeol synthase of Sulfurisphaera tokodaii (strain DSM 16993 / JCM 10545 / NBRC 100140 / 7) (Sulfolobus tokodaii).